The primary structure comprises 463 residues: GTPase Der (463 aa).

Residues 1–20 (MDEGDEDLISGRGFTEGARK) are disordered. 2 EngA-type G domains span residues 27–190 (GVLA…KQAE) and 202–375 (RRVA…ESWD). GTP contacts are provided by residues 33–40 (GRPNVGKS), 80–84 (DTGGW), 142–145 (NKID), 208–215 (GRPNVGKS), 255–259 (DTAGI), and 320–323 (NKWD). The region spanning 376–458 (QRIPTGKLNA…PIQISVNIRE (83 aa)) is the KH-like domain.

Belongs to the TRAFAC class TrmE-Era-EngA-EngB-Septin-like GTPase superfamily. EngA (Der) GTPase family. In terms of assembly, associates with the 50S ribosomal subunit.

Functionally, GTPase that plays an essential role in the late steps of ribosome biogenesis. The chain is GTPase Der from Bifidobacterium longum (strain NCC 2705).